Here is an 81-residue protein sequence, read N- to C-terminus: Protein PYP1 (81 aa).

The N-terminal 25 residues, 1–25 (MAFVSGFTGMPVTARVSKAVCRTRM), are a transit peptide targeting the chloroplast. Positions 27–57 (LEGGKSSGGGEATRDPEPTAVDPNDPKGKQQ) are disordered.

It localises to the plastid. The protein localises to the chloroplast. The sequence is that of Protein PYP1 from Pyropia yezoensis (Susabi-nori).